A 239-amino-acid polypeptide reads, in one-letter code: Small ribosomal subunit protein uS2 (239 aa).

This sequence belongs to the universal ribosomal protein uS2 family.

This chain is Small ribosomal subunit protein uS2, found in Prochlorococcus marinus (strain MIT 9303).